A 385-amino-acid polypeptide reads, in one-letter code: Putative nickel insertion protein (385 aa).

The protein belongs to the LarC family.

The chain is Putative nickel insertion protein from Citrifermentans bemidjiense (strain ATCC BAA-1014 / DSM 16622 / JCM 12645 / Bem) (Geobacter bemidjiensis).